Here is a 334-residue protein sequence, read N- to C-terminus: MLYSLARPMLFSLAPERAHELTLSMLDKAHKLGIMRQTVEAKPTTCMGIEFPNPVGLAAGLDKNGAHIDALAGLGFGFIEIGTITPHPQSGNPKPRLFRIPEAKAIINRMGFNNDGVDKLIENVKASKFRGILGINIGKNADTPVEKAVDDYLICLEKVYNYASYITVNISSPNTKNLRSLQSGDALTELLQALKARQLELAEQYNHYVPLVLKVAPDLTAEDVEFISAQLLDFKIDGLIVTNTTLSREGVENLPYGNESGGLSGAPVFEKSTECLRLFAQTLKGQISLIGVGGILSGEQAAAKQQAGATLVQIYSGLIYTGPTLVKQCVEAMT.

Residues 59-63 (AGLDK) and Thr83 contribute to the FMN site. Lys63 lines the substrate pocket. 108-112 (NRMGF) lines the substrate pocket. Residues Asn136 and Asn169 each coordinate FMN. Residue Asn169 participates in substrate binding. Residue Ser172 is the Nucleophile of the active site. Asn174 lines the substrate pocket. The FMN site is built by Lys214 and Thr242. 243–244 (NT) is a binding site for substrate. FMN is bound by residues Gly265, Gly294, and 315-316 (YS).

Belongs to the dihydroorotate dehydrogenase family. Type 2 subfamily. In terms of assembly, monomer. Requires FMN as cofactor.

The protein resides in the cell membrane. The catalysed reaction is (S)-dihydroorotate + a quinone = orotate + a quinol. The protein operates within pyrimidine metabolism; UMP biosynthesis via de novo pathway; orotate from (S)-dihydroorotate (quinone route): step 1/1. Its function is as follows. Catalyzes the conversion of dihydroorotate to orotate with quinone as electron acceptor. This Acinetobacter baumannii (strain SDF) protein is Dihydroorotate dehydrogenase (quinone).